Here is a 382-residue protein sequence, read N- to C-terminus: Heme A synthase (382 aa).

The next 8 helical transmembrane spans lie at 25-45 (GAVRAWLYLLAVLVVAMVAVG), 112-132 (LLGRIVGLVFFLPFAWFWARG), 141-161 (GLLGLGLLGGLQGAIGWIMVA), 176-196 (LALHLTTASLILAGLVWLAAG), 211-231 (VVACLLPALVLVQIWLGGLVA), 270-290 (LALVQFNHRLFAYLVVAVAIA), 303-323 (AAAGRAMGVAALATAQMGLGI), and 327-347 (LLHVPLWAGLAHQVFAMAVLI). Histidine 277 serves as a coordination point for heme. Histidine 338 serves as a coordination point for heme.

It belongs to the COX15/CtaA family. Type 2 subfamily. As to quaternary structure, interacts with CtaB. Heme b is required as a cofactor.

The protein localises to the cell membrane. It catalyses the reaction Fe(II)-heme o + 2 A + H2O = Fe(II)-heme a + 2 AH2. The protein operates within porphyrin-containing compound metabolism; heme A biosynthesis; heme A from heme O: step 1/1. In terms of biological role, catalyzes the conversion of heme O to heme A by two successive hydroxylations of the methyl group at C8. The first hydroxylation forms heme I, the second hydroxylation results in an unstable dihydroxymethyl group, which spontaneously dehydrates, resulting in the formyl group of heme A. The sequence is that of Heme A synthase from Methylorubrum extorquens (strain CM4 / NCIMB 13688) (Methylobacterium extorquens).